Here is a 428-residue protein sequence, read N- to C-terminus: GTPase Obg (428 aa).

The Obg domain maps to methionine 1–leucine 158. The OBG-type G domain maps to alanine 159–lysine 331. Residues glycine 165–serine 172, phenylalanine 190–lysine 194, aspartate 212–glycine 215, asparagine 282–aspartate 285, and serine 312–alanine 314 each bind GTP. Mg(2+) contacts are provided by serine 172 and threonine 192. Positions arginine 345–leucine 428 constitute an OCT domain.

It belongs to the TRAFAC class OBG-HflX-like GTPase superfamily. OBG GTPase family. In terms of assembly, monomer. The cofactor is Mg(2+).

It is found in the cytoplasm. In terms of biological role, an essential GTPase which binds GTP, GDP and possibly (p)ppGpp with moderate affinity, with high nucleotide exchange rates and a fairly low GTP hydrolysis rate. Plays a role in control of the cell cycle, stress response, ribosome biogenesis and in those bacteria that undergo differentiation, in morphogenesis control. The protein is GTPase Obg of Clostridium perfringens (strain ATCC 13124 / DSM 756 / JCM 1290 / NCIMB 6125 / NCTC 8237 / Type A).